We begin with the raw amino-acid sequence, 73 residues long: MTTENDLLNRIAELETKVAFQEITLEELNQALIHHQLALDKLQTQMRHFAEKLKGAQVSNIASQAEETPPPHY.

It belongs to the SlyX family.

The polypeptide is Protein SlyX homolog (Actinobacillus pleuropneumoniae serotype 5b (strain L20)).